A 652-amino-acid polypeptide reads, in one-letter code: Spermatogenesis-associated protein 13 (652 aa).

Positions Met1–Pro24 are disordered. Ser78 carries the post-translational modification Phosphoserine. The tract at residues Ile81–Leu108 is disordered. An ABR (APC-binding region) domain region spans residues Ser98–Val150. Ser114 bears the Phosphoserine mark. Residues Gly147–Asn206 enclose the SH3 domain. The segment at Glu209–Glu235 is disordered. Positions Met240–Arg424 constitute a DH domain. A PH domain is found at Glu455–Arg561. A C-terminal tail region spans residues Arg561–Lys652.

Interacts (via ABR and SH3 domain) with APC. The binding of APC enhances its GEF activity by relieving it from an autoinhibitory conformation, in which the ABR and SH3 domains are associated with the C-terminal tail. Interacts (via C-terminal tail) with PPP1R9B (via C-terminus). Interacts with RAC1. As to expression, expressed at high levels in the placenta, spleen and kidney, at moderate levels in lung, small intestine, liver, brain and heart, and at low levels in skeletal muscle. Expression is aberrantly enhanced in most colorectal tumors.

It localises to the cytoplasm. The protein resides in the cell projection. It is found in the filopodium. Its subcellular location is the lamellipodium. The protein localises to the ruffle membrane. It localises to the podosome. Both the ABR and the SH3 domains contribute to maintaining the protein in an inhibited conformation by associating with the C-terminal tail. Binding of these domains to the C-terminal tail inhibits the activity of the protein by blocking a region that is required for its GEF activity. In terms of biological role, acts as a guanine nucleotide exchange factor (GEF) for RHOA, RAC1 and CDC42 GTPases. Regulates cell migration and adhesion assembly and disassembly through a RAC1, PI3K, RHOA and AKT1-dependent mechanism. Increases both RAC1 and CDC42 activity, but decreases the amount of active RHOA. Required for MMP9 up-regulation via the JNK signaling pathway in colorectal tumor cells. Involved in tumor angiogenesis and may play a role in intestinal adenoma formation and tumor progression. This is Spermatogenesis-associated protein 13 from Homo sapiens (Human).